The sequence spans 122 residues: UPF0102 protein VCM66_0538 (122 aa).

This sequence belongs to the UPF0102 family.

In Vibrio cholerae serotype O1 (strain M66-2), this protein is UPF0102 protein VCM66_0538.